Here is a 598-residue protein sequence, read N- to C-terminus: Aspartate--tRNA(Asp/Asn) ligase (598 aa).

Glutamate 177 contacts L-aspartate. Residues 201–204 (QIFK) are aspartate. L-aspartate is bound by residues arginine 223 and histidine 451. Position 223-225 (223-225 (RDE)) interacts with ATP. Glutamate 485 is a binding site for ATP. Arginine 492 contacts L-aspartate. 537 to 540 (GVDR) serves as a coordination point for ATP.

This sequence belongs to the class-II aminoacyl-tRNA synthetase family. Type 1 subfamily. As to quaternary structure, homodimer.

The protein localises to the cytoplasm. It catalyses the reaction tRNA(Asx) + L-aspartate + ATP = L-aspartyl-tRNA(Asx) + AMP + diphosphate. Its function is as follows. Aspartyl-tRNA synthetase with relaxed tRNA specificity since it is able to aspartylate not only its cognate tRNA(Asp) but also tRNA(Asn). Reaction proceeds in two steps: L-aspartate is first activated by ATP to form Asp-AMP and then transferred to the acceptor end of tRNA(Asp/Asn). The sequence is that of Aspartate--tRNA(Asp/Asn) ligase from Anaplasma phagocytophilum (strain HZ).